Consider the following 307-residue polypeptide: Ornithine carbamoyltransferase (307 aa).

Carbamoyl phosphate contacts are provided by residues 54-57, Gln81, Arg105, and 132-135; these read STRT and HPCQ. Residues Asn163, Asp221, and 225 to 226 contribute to the L-ornithine site; that span reads SM. Carbamoyl phosphate is bound by residues 261-262 and Arg289; that span reads CL.

It belongs to the aspartate/ornithine carbamoyltransferase superfamily. OTCase family.

It localises to the cytoplasm. The catalysed reaction is carbamoyl phosphate + L-ornithine = L-citrulline + phosphate + H(+). It participates in amino-acid biosynthesis; L-arginine biosynthesis; L-arginine from L-ornithine and carbamoyl phosphate: step 1/3. Functionally, reversibly catalyzes the transfer of the carbamoyl group from carbamoyl phosphate (CP) to the N(epsilon) atom of ornithine (ORN) to produce L-citrulline. The polypeptide is Ornithine carbamoyltransferase (Chromobacterium violaceum (strain ATCC 12472 / DSM 30191 / JCM 1249 / CCUG 213 / NBRC 12614 / NCIMB 9131 / NCTC 9757 / MK)).